A 220-amino-acid chain; its full sequence is Glycerol-3-phosphate acyltransferase (220 aa).

The next 6 helical transmembrane spans lie at isoleucine 11–leucine 31, leucine 70–phenylalanine 90, leucine 96–phenylalanine 116, glycine 127–valine 147, isoleucine 153–proline 173, and methionine 193–alanine 213.

It belongs to the PlsY family. As to quaternary structure, probably interacts with PlsX.

The protein localises to the cell inner membrane. The enzyme catalyses an acyl phosphate + sn-glycerol 3-phosphate = a 1-acyl-sn-glycero-3-phosphate + phosphate. It functions in the pathway lipid metabolism; phospholipid metabolism. In terms of biological role, catalyzes the transfer of an acyl group from acyl-phosphate (acyl-PO(4)) to glycerol-3-phosphate (G3P) to form lysophosphatidic acid (LPA). This enzyme utilizes acyl-phosphate as fatty acyl donor, but not acyl-CoA or acyl-ACP. This is Glycerol-3-phosphate acyltransferase from Helicobacter acinonychis (strain Sheeba).